A 396-amino-acid polypeptide reads, in one-letter code: Purine ribonucleoside efflux pump NepI (396 aa).

Residues 1–21 (MSEFIAENRGADAITRPNWSA) lie on the Cytoplasmic side of the membrane. The helical transmembrane segment at 22–42 (VFSVAFCVACLIIVEFLPVSL) threads the bilayer. Topologically, residues 43–54 (LTPMAQDLGISE) are periplasmic. A helical transmembrane segment spans residues 55 to 75 (GVAGQSVTVTAFVAMFASLFI). Residues 76-85 (TQTIQATDRR) lie on the Cytoplasmic side of the membrane. Residues 86–106 (YVVILFAVLLTLSCLLVSFAN) form a helical membrane-spanning segment. Serine 107 is a topological domain (periplasmic). The chain crosses the membrane as a helical span at residues 108-128 (FSLLLIGRACLGLALGGFWAM). Over 129–147 (SASLTMRLVPPRTVPKALS) the chain is Cytoplasmic. Residues 148–168 (VIFGAVSIALVIAAPLGSFLG) traverse the membrane as a helical segment. At 169 to 175 (ELIGWRN) the chain is on the periplasmic side. The helical transmembrane segment at 176-196 (VFNAAAAMGVLCIFWIIKSLP) threads the bilayer. Residues 197–215 (SLPGEPSHQKQNTFRLLQR) are Cytoplasmic-facing. A helical transmembrane segment spans residues 216 to 236 (PGVMAGMIAIFMSFAGQFAFF). Residues 237–255 (TYIRPVYMNLAGFGVDGLT) lie on the Periplasmic side of the membrane. Residues 256 to 276 (LVLLSFGIASFVGTSLSSFIL) form a helical membrane-spanning segment. Topologically, residues 277–281 (KRSVK) are cytoplasmic. The helical transmembrane segment at 282 to 302 (LALAGAPFVLALSALVLTLWG) threads the bilayer. Residues 303–305 (SDK) lie on the Periplasmic side of the membrane. A helical transmembrane segment spans residues 306 to 326 (IVATGVAIIWGLTFALIPVGW). Topologically, residues 327 to 343 (STWITRSLADQAEKAGS) are cytoplasmic. Residues 344 to 364 (IQVAVIQLANTCGAAIGGYAL) traverse the membrane as a helical segment. Topologically, residues 365-366 (DN) are periplasmic. The chain crosses the membrane as a helical span at residues 367 to 387 (IGLTSPLMLSGTLMLLTALLV). Topologically, residues 388 to 396 (TAKVKMKKS) are cytoplasmic.

Belongs to the major facilitator superfamily. DHA1 family. NepI (TC 2.A.1.2.26) subfamily.

The protein localises to the cell inner membrane. The enzyme catalyses inosine(in) + H(+)(out) = inosine(out) + H(+)(in). It catalyses the reaction guanosine(in) + H(+)(out) = guanosine(out) + H(+)(in). In terms of biological role, involved in the efflux of purine ribonucleosides, such as inosine and guanosine. This is Purine ribonucleoside efflux pump NepI from Escherichia coli O1:K1 / APEC.